A 530-amino-acid polypeptide reads, in one-letter code: Phosphoenolpyruvate carboxykinase (ATP) (530 aa).

Residues arginine 59, tyrosine 198, and lysine 204 each coordinate substrate. Residues lysine 204, histidine 223, and 239 to 247 (GLSGTGKTT) each bind ATP. Residues lysine 204 and histidine 223 each contribute to the Mn(2+) site. Aspartate 260 serves as a coordination point for Mn(2+). ATP is bound by residues glutamate 288, arginine 325, 440–441 (RI), and threonine 446. Arginine 325 contributes to the substrate binding site.

The protein belongs to the phosphoenolpyruvate carboxykinase (ATP) family. Mn(2+) is required as a cofactor.

Its subcellular location is the cytoplasm. It catalyses the reaction oxaloacetate + ATP = phosphoenolpyruvate + ADP + CO2. It participates in carbohydrate biosynthesis; gluconeogenesis. Functionally, involved in the gluconeogenesis. Catalyzes the conversion of oxaloacetate (OAA) to phosphoenolpyruvate (PEP) through direct phosphoryl transfer between the nucleoside triphosphate and OAA. This is Phosphoenolpyruvate carboxykinase (ATP) from Azobacteroides pseudotrichonymphae genomovar. CFP2.